The following is a 231-amino-acid chain: Protein RhiA (231 aa).

Functionally, may be involved in plant-microbe interaction. The chain is Protein RhiA (rhiA) from Rhizobium leguminosarum bv. viciae.